Reading from the N-terminus, the 370-residue chain is Queuine tRNA-ribosyltransferase (370 aa).

The Proton acceptor role is filled by aspartate 92. Substrate is bound by residues 92 to 96, aspartate 146, glutamine 190, and glycine 217; that span reads DSGGF. The tract at residues 248–254 is RNA binding; it reads GVGTPEN. The active-site Nucleophile is aspartate 267. Cysteine 305, cysteine 307, cysteine 310, and histidine 336 together coordinate Zn(2+).

The protein belongs to the queuine tRNA-ribosyltransferase family. Homodimer. Within each dimer, one monomer is responsible for RNA recognition and catalysis, while the other monomer binds to the replacement base PreQ1. Zn(2+) serves as cofactor.

The enzyme catalyses 7-aminomethyl-7-carbaguanine + guanosine(34) in tRNA = 7-aminomethyl-7-carbaguanosine(34) in tRNA + guanine. It functions in the pathway tRNA modification; tRNA-queuosine biosynthesis. Catalyzes the base-exchange of a guanine (G) residue with the queuine precursor 7-aminomethyl-7-deazaguanine (PreQ1) at position 34 (anticodon wobble position) in tRNAs with GU(N) anticodons (tRNA-Asp, -Asn, -His and -Tyr). Catalysis occurs through a double-displacement mechanism. The nucleophile active site attacks the C1' of nucleotide 34 to detach the guanine base from the RNA, forming a covalent enzyme-RNA intermediate. The proton acceptor active site deprotonates the incoming PreQ1, allowing a nucleophilic attack on the C1' of the ribose to form the product. After dissociation, two additional enzymatic reactions on the tRNA convert PreQ1 to queuine (Q), resulting in the hypermodified nucleoside queuosine (7-(((4,5-cis-dihydroxy-2-cyclopenten-1-yl)amino)methyl)-7-deazaguanosine). This is Queuine tRNA-ribosyltransferase from Desulforapulum autotrophicum (strain ATCC 43914 / DSM 3382 / VKM B-1955 / HRM2) (Desulfobacterium autotrophicum).